The sequence spans 196 residues: Gastrula zinc finger protein XlCGF8.2DB (196 aa).

C2H2-type zinc fingers lie at residues 6 to 28 (FTCKECGKGFTQKRNLASHMTIH), 34 to 56 (FSCTECGKGFTQKRNLASHLTIH), 62 to 84 (FPCTECGKGFTQKSNLVSHMKIH), 90 to 112 (FTCTECGKEFAHKHRLLGHLKIH), 118 to 140 (FSCTECGKHFAHKYHLVSHMKIH), 146 to 168 (FTCTECGEHFANKVSLLGHLKMH), and 174 to 196 (FTCTECGNSFTQVSSLVSHMKIH).

It belongs to the krueppel C2H2-type zinc-finger protein family.

Its subcellular location is the nucleus. May be involved in transcriptional regulation. The chain is Gastrula zinc finger protein XlCGF8.2DB from Xenopus laevis (African clawed frog).